The chain runs to 571 residues: RNA polymerase sigma factor SigA (571 aa).

The interval 321 to 391 is sigma-70 factor domain-2; it reads MVESNLRLVI…TRAIADQART (71 aa). The Interaction with polymerase core subunit RpoC motif lies at 345-348; it reads DLIQ. Positions 400–476 are sigma-70 factor domain-3; sequence ETINKVLRGA…DTAVESPAEA (77 aa). The interval 489 to 542 is sigma-70 factor domain-4; sequence VLKTLTDRERFVLIHRFGLLDGRPKTLEEVGSAFNVTRERIRQIEAKALRKMRH. The segment at residues 515–534 is a DNA-binding region (H-T-H motif); it reads LEEVGSAFNVTRERIRQIEA.

Belongs to the sigma-70 factor family. RpoD/SigA subfamily. In terms of assembly, interacts transiently with the RNA polymerase catalytic core.

Its subcellular location is the cytoplasm. Functionally, sigma factors are initiation factors that promote the attachment of RNA polymerase to specific initiation sites and are then released. This sigma factor is the primary sigma factor during exponential growth. The sequence is that of RNA polymerase sigma factor SigA from Chlamydia muridarum (strain MoPn / Nigg).